A 146-amino-acid chain; its full sequence is Kappa-casein (146 aa).

Residues threonine 107 and threonine 112 are each glycosylated (O-linked (GalNAc...) threonine). At serine 125 the chain carries Phosphoserine; alternate. O-linked (GalNAc...) serine; alternate glycosylation occurs at serine 125. The O-linked (GalNAc...) threonine glycan is linked to threonine 142. At serine 143 the chain carries Phosphoserine.

The protein belongs to the kappa-casein family. In terms of tissue distribution, mammary gland specific. Secreted in milk.

The protein resides in the secreted. Its function is as follows. Kappa-casein stabilizes micelle formation, preventing casein precipitation in milk. In Tapirus indicus (Asiatic tapir), this protein is Kappa-casein (CSN3).